Consider the following 273-residue polypeptide: Type II methyltransferase M2.MboI (273 aa).

Belongs to the N(4)/N(6)-methyltransferase family.

The enzyme catalyses a 2'-deoxyadenosine in DNA + S-adenosyl-L-methionine = an N(6)-methyl-2'-deoxyadenosine in DNA + S-adenosyl-L-homocysteine + H(+). In terms of biological role, a beta subtype methylase that recognizes the double-stranded sequence 5'-GATC-3', methylates A-2 on both strands, and protects the DNA from cleavage by the MboI endonuclease. This seems to be a weaker methylase than M1.MboI. This chain is Type II methyltransferase M2.MboI (mboIBM), found in Moraxella bovis.